Consider the following 341-residue polypeptide: MTGGVPSLGFACQPDAAEALERWGRWLEHERGASTHTLRSYRADLAGFLAFVAEHRGRPPGLNDLGALDLGAFRAWLAARAADGAGAATRSRGVSGVRSFFRWADRSGLLHNPAIALLTAPKAQRPLPRPLAADDAALLLEEAAAVPEAPWIGLRDRALFTLLYGCGLRISEAIGLNRSDLPAGAASVRVLGKGGKQRDVPVLPAVREAVAAYLAAVPWGGGRAAPLFVGAKGDRLSPDVARRQMRHLRALLGLPDSTTPHALRHSFATHLLGGGADLRAIQDLLGHASLSTTQRYTDVDAEHLLSVYETAHPRARRQGHQTVRSVCDALPPRLRNQESER.

One can recognise a Core-binding (CB) domain in the interval 14–105 (PDAAEALERW…GVRSFFRWAD (92 aa)). Positions 126–309 (PLPRPLAADD…DAEHLLSVYE (184 aa)) constitute a Tyr recombinase domain. Residues Arg-169, Lys-193, His-261, Arg-264, and His-287 contribute to the active site. Tyr-296 functions as the O-(3'-phospho-DNA)-tyrosine intermediate in the catalytic mechanism.

Belongs to the 'phage' integrase family. XerC subfamily. As to quaternary structure, forms a cyclic heterotetrameric complex composed of two molecules of XerC and two molecules of XerD.

It is found in the cytoplasm. Site-specific tyrosine recombinase, which acts by catalyzing the cutting and rejoining of the recombining DNA molecules. The XerC-XerD complex is essential to convert dimers of the bacterial chromosome into monomers to permit their segregation at cell division. It also contributes to the segregational stability of plasmids. In Rhodospirillum centenum (strain ATCC 51521 / SW), this protein is Tyrosine recombinase XerC.